The following is a 91-amino-acid chain: Mercuric transport protein periplasmic component (91 aa).

An N-terminal signal peptide occupies residues 1–19; that stretch reads MKKLLSALALAAVVAPVWA. Positions 22-88 constitute an HMA domain; the sequence is QTVTLSVPGM…ATEDAGYPSS (67 aa). Hg(2+) is bound by residues Cys33 and Cys36.

It belongs to the MerP family. In terms of assembly, monomer.

It is found in the periplasm. Involved in mercury resistance. Acts as a mercury scavenger that specifically binds to a mercuric ion in the periplasm and probably passes it to the cytoplasmic mercuric reductase MerA via the mercuric transport protein MerT. This chain is Mercuric transport protein periplasmic component, found in Pseudomonas fluorescens.